The sequence spans 465 residues: uncharacterized protein (465 aa).

The segment covering 87–112 (KTSQQIDSSPPQTPTTSNGSMMTRRQ) has biased composition (polar residues). 2 disordered regions span residues 87–169 (KTSQ…SYDD) and 201–244 (EGYI…NNIF). Residues 113–139 (NANNAISSNNNTNTNVTNGSSSNTSLN) show a composition bias toward low complexity. Residues 141-157 (GDEEQEEEEEEENDEDS) are compositionally biased toward acidic residues. A compositionally biased stretch (low complexity) spans 217–244 (NRNNNNNNINKNNNNNINNNNNNNNNIF).

This is an uncharacterized protein from Dictyostelium discoideum (Social amoeba).